Here is a 144-residue protein sequence, read N- to C-terminus: Large ribosomal subunit protein uL13 (144 aa).

Belongs to the universal ribosomal protein uL13 family. In terms of assembly, part of the 50S ribosomal subunit.

This protein is one of the early assembly proteins of the 50S ribosomal subunit, although it is not seen to bind rRNA by itself. It is important during the early stages of 50S assembly. The polypeptide is Large ribosomal subunit protein uL13 (Nitratidesulfovibrio vulgaris (strain DSM 19637 / Miyazaki F) (Desulfovibrio vulgaris)).